The sequence spans 334 residues: Probable tRNA pseudouridine synthase B (334 aa).

Asp82 functions as the Nucleophile in the catalytic mechanism. Residues 250–325 (LPKIWIKDSA…IAVDVEKVFM (76 aa)) form the PUA domain.

It belongs to the pseudouridine synthase TruB family. Type 2 subfamily.

It carries out the reaction uridine(55) in tRNA = pseudouridine(55) in tRNA. In terms of biological role, could be responsible for synthesis of pseudouridine from uracil-55 in the psi GC loop of transfer RNAs. The sequence is that of Probable tRNA pseudouridine synthase B from Pyrococcus abyssi (strain GE5 / Orsay).